A 185-amino-acid polypeptide reads, in one-letter code: Small ribosomal subunit protein uS4 (185 aa).

Residues 107–179 (RRLQTLVYRK…NGRRKRKNNH (73 aa)) form the S4 RNA-binding domain. Residues 161-185 (NTPLTNPEINGRRKRKNNHAGKEDN) are disordered.

Belongs to the universal ribosomal protein uS4 family.

This Entamoeba histolytica (strain ATCC 30459 / HM-1:IMSS / ABRM) protein is Small ribosomal subunit protein uS4.